The following is a 296-amino-acid chain: tRNA dimethylallyltransferase (296 aa).

Residue glycine 9–threonine 16 coordinates ATP. Threonine 11 to threonine 16 contacts substrate. Positions aspartate 34–glutamine 37 are interaction with substrate tRNA.

It belongs to the IPP transferase family. Monomer. Mg(2+) is required as a cofactor.

It carries out the reaction adenosine(37) in tRNA + dimethylallyl diphosphate = N(6)-dimethylallyladenosine(37) in tRNA + diphosphate. Functionally, catalyzes the transfer of a dimethylallyl group onto the adenine at position 37 in tRNAs that read codons beginning with uridine, leading to the formation of N6-(dimethylallyl)adenosine (i(6)A). The polypeptide is tRNA dimethylallyltransferase (Chloroflexus aggregans (strain MD-66 / DSM 9485)).